Reading from the N-terminus, the 275-residue chain is Ribosomal RNA small subunit methyltransferase A (275 aa).

Positions 19, 21, 46, 71, 94, and 117 each coordinate S-adenosyl-L-methionine.

The protein belongs to the class I-like SAM-binding methyltransferase superfamily. rRNA adenine N(6)-methyltransferase family. RsmA subfamily.

It is found in the cytoplasm. It catalyses the reaction adenosine(1518)/adenosine(1519) in 16S rRNA + 4 S-adenosyl-L-methionine = N(6)-dimethyladenosine(1518)/N(6)-dimethyladenosine(1519) in 16S rRNA + 4 S-adenosyl-L-homocysteine + 4 H(+). Its function is as follows. Specifically dimethylates two adjacent adenosines (A1518 and A1519) in the loop of a conserved hairpin near the 3'-end of 16S rRNA in the 30S particle. May play a critical role in biogenesis of 30S subunits. The polypeptide is Ribosomal RNA small subunit methyltransferase A (Burkholderia mallei (strain NCTC 10247)).